The primary structure comprises 434 residues: MTFLLFQLLVLLRYSIGFHCKIDNNGVKSVTSKKNDDEKIVISRNWKAAISLDFIFIVFPMLLFFTVLSEWVYHGTGLLSLLVLILSVTAKRSFSGLQRGQSLSFRASVSSYRVALMLITCLCILAVDFTIFPRRYAKTETYGTSLMDLGVGSFVLANAVVSRQARDVSSGNWITGIKATAPLLLLGFIRLVTTSGVDYQVHVTEYGVHWNFFFTLAAISILTSFVNIPAKYCGLLGFAVLAGYQTWLLSGLNTYLLSDERGTDIISKNKEGVYSILGYWGMYLLGVHLGYRLFYGKHTNIRSTTSSIARVFLVSLLLWIVTILFDNYVERISRRTCNMPYVTWVLAQDLQALGIFMLSSYIPLNKLSSLEEAIDQNLLATFLLANLVTGMVNLTVDTIFASPFSSLLILTAYAFALSAIIGTIHFSGFRLKFW.

An N-terminal signal peptide occupies residues 1–17; sequence MTFLLFQLLVLLRYSIG. 12 helical membrane-spanning segments follow: residues 48–68, 70–90, 112–132, 141–161, 173–193, 206–226, 232–252, 271–291, 305–325, 344–364, 380–400, and 404–424; these read AAISLDFIFIVFPMLLFFTVL, EWVYHGTGLLSLLVLILSVTA, YRVALMLITCLCILAVDFTIF, TYGTSLMDLGVGSFVLANAVV, WITGIKATAPLLLLGFIRLVT, YGVHWNFFFTLAAISILTSFV, YCGLLGFAVLAGYQTWLLSGL, EGVYSILGYWGMYLLGVHLGY, TSSIARVFLVSLLLWIVTILF, WVLAQDLQALGIFMLSSYIPL, ATFLLANLVTGMVNLTVDTIF, and FSSLLILTAYAFALSAIIGTI.

It is found in the membrane. This is an uncharacterized protein from Arabidopsis thaliana (Mouse-ear cress).